The sequence spans 187 residues: MKRIVVGITGASGTIYAVDLLEKLHQRPDVEVHLVMSAWAKKNLELETDYSLAQLTALADATYRANDQGAAIASGSFLNDGMVIVPASMKTVAGIAYGFGDNLISRAADVTIKEQRKLVIVPRETPLSVIHLENLTKLAKLGAQIIPPIPAFYNHPQSIQDLVNHQTMKILDAFHIHNETDRRWEGD.

FMN-binding positions include 10–12 (GAS), Ser37, 88–91 (SMKT), and Arg123. Positions 153 and 169 each coordinate dimethylallyl phosphate.

It belongs to the UbiX/PAD1 family.

The catalysed reaction is dimethylallyl phosphate + FMNH2 = prenylated FMNH2 + phosphate. Involved in tannin degradation. Flavin prenyltransferase that catalyzes the synthesis of the prenylated FMN cofactor (prenyl-FMN) for gallate decarboxylase LpdC. The prenyltransferase is metal-independent and links a dimethylallyl moiety from dimethylallyl monophosphate (DMAP) to the flavin N5 and C6 atoms of FMN. This chain is Flavin prenyltransferase LpdB, found in Lactiplantibacillus plantarum (strain ATCC BAA-793 / NCIMB 8826 / WCFS1) (Lactobacillus plantarum).